We begin with the raw amino-acid sequence, 622 residues long: Chaperone protein HscA homolog (622 aa).

It belongs to the heat shock protein 70 family.

Its function is as follows. Chaperone involved in the maturation of iron-sulfur cluster-containing proteins. Has a low intrinsic ATPase activity which is markedly stimulated by HscB. This Burkholderia pseudomallei (strain K96243) protein is Chaperone protein HscA homolog.